A 2234-amino-acid chain; its full sequence is RNA-directed RNA polymerase L (2234 aa).

The segment at 26 to 283 (ITVVTSQTEM…INLSDEKLSC (258 aa)) is endonuclease. E51, D89, and E102 together coordinate Mn(2+). K115 is an active-site residue. Residues 879 to 891 (KRDDHMKDSEDSK) show a composition bias toward basic and acidic residues. Disordered regions lie at residues 879 to 898 (KRDD…SSDL) and 927 to 949 (KLKE…QQKR). Residues 935–945 (RQSSSGSSLKN) show a composition bias toward polar residues. Residues 1184-1383 (MEMKMSVNLG…FISSKFNKFV (200 aa)) form the RdRp catalytic domain. Residue D1342 participates in Mg(2+) binding.

This sequence belongs to the Bunyavirales RNA polymerase family. In terms of assembly, homomultimer; the oligomeric structure is essential for the polymerase activity. Interacts with nucleoprotein N. Interacts with protein Z; this interaction inhibits viral transcription and replication, Z partially blocks the product exit tunnel for the releasing nascent RNA product. Requires Mn(2+) as cofactor. The cofactor is Mg(2+).

The protein localises to the virion. It is found in the host cytoplasm. The catalysed reaction is RNA(n) + a ribonucleoside 5'-triphosphate = RNA(n+1) + diphosphate. Functionally, RNA-dependent RNA polymerase, which is responsible for the replication and transcription of the viral RNA genome using antigenomic RNA as an intermediate. During transcription, synthesizes subgenomic RNAs and assures their capping by a cap-snatching mechanism, which involves the endonuclease activity cleaving the host capped pre-mRNAs. These short capped RNAs are then used as primers for viral transcription. The 3'-end of subgenomic mRNAs molecules are heterogeneous and not polyadenylated. The replicase function is to direct synthesis of antigenomic and genomic RNA which are encapsidated and non capped. As a consequence of the use of the same enzyme for both transcription and replication, these mechanisms need to be well coordinated. These processes may be regulated by proteins N and Z in a dose-dependent manner. Z protein inhibits the viral polymerase L und thus the viral transcription and RNA synthesis. The protein is RNA-directed RNA polymerase L of Bolomys (OLVV).